An 839-amino-acid polypeptide reads, in one-letter code: Transient receptor potential cation channel subfamily V member 1 (839 aa).

A compositionally biased stretch (basic and acidic residues) spans 1–13 (MKKRASVDSKESE). Disordered regions lie at residues 1–59 (MKKR…LEES) and 82–107 (VVTS…PTSA). The Cytoplasmic segment spans residues 1 to 433 (MKKRASVDSK…LQDKWDRFVK (433 aa)). Over residues 92–105 (PTSTRQLTQDSIPT) the composition is skewed to polar residues. The stretch at 111-139 (LKLYDRRSIFDAVAQNNCQDLDSLLPFLQ) is one ANK 1 repeat. R117 contacts ATP. At S118 the chain carries Phosphoserine; by PKA and PKD. T146 is modified (phosphothreonine; by PKA; in vitro). ANK repeat units lie at residues 154–187 (ETGK…QTNS), 204–229 (QTAL…GADV), 250–277 (GELP…WQPA), 286–322 (GNTV…AKLY), and 336–359 (FTPL…QREI). Residues K157, K162, N166, 201–204 (YRGQ), and 212–213 (ER) contribute to the ATP site. T372 carries the phosphothreonine; by PKA; in vitro modification. The ANK 7 repeat unit spans residues 394 to 416 (KNSVLEVIAYSSSETPNRHDMLL). Residues 434 to 455 (RIFYFNFFIYCLYMIIFTMAAY) form a helical membrane-spanning segment. Topologically, residues 456–472 (YRPVDGLPPYKMKNTVG) are extracellular. The chain crosses the membrane as a helical span at residues 473–497 (DYFRVTGEILSVIGGFHFFFRGIQY). The Cytoplasmic segment spans residues 498–510 (FLQRRPSVKTLFV). S504 is subject to Phosphoserine; by PKC/PRKCE. Residues 511–532 (DSYSEILFFVQSLFLLASVVLY) form a helical membrane-spanning segment. 513–514 (YS) serves as a coordination point for resiniferatoxin. The Extracellular portion of the chain corresponds to 533–535 (FSH). A helical membrane pass occupies residues 536–556 (RKEYVACMVFSLALGWTNMLY). 2 residues coordinate resiniferatoxin: T552 and R559. At 557-559 (YTR) the chain is on the cytoplasmic side. A helical transmembrane segment spans residues 560-598 (GFQQMGIYAVMIEKMILRDLCRFMFVYLVFLFGFSTAVV). Residues 599–630 (TLIEDGKNESLSAEPHRWRGPGCRSAKNSYNS) lie on the Extracellular side of the membrane. A glycan (N-linked (GlcNAc...) asparagine) is linked at N606. The pore-forming intramembrane region spans 631 to 652 (LYSTCLELFKFTIGMGDLEFTE). G644 is a Na(+) binding site. The Selectivity filter motif lies at 644–647 (GMGD). D647 is a Ca(2+) binding site. Residues 653–656 (NYDF) lie on the Extracellular side of the membrane. A helical membrane pass occupies residues 657 to 683 (KAVFIILLLAYVILTYILLLNMLIALM). Residues 684–839 (GETVNKIAQE…FKDSAVPGEK (156 aa)) lie on the Cytoplasmic side of the membrane. Positions 685–713 (ETVNKIAQESKNIWKLQRAITILDTEKSF) are AD. T705 is subject to Phosphothreonine. The segment at 768–802 (EGVKRTLSFSLRSGRVSGRNWKNFALVPLLRDAST) is interaction with calmodulin. A Phosphoserine modification is found at S775. The segment at 778-793 (LRSGRVSGRNWKNFAL) is required for PIP2-mediated channel inhibition. S801 bears the Phosphoserine; by PKC/PRKCE and PKC/PRKCZ mark. S821 bears the Phosphoserine mark.

The protein belongs to the transient receptor (TC 1.A.4) family. TrpV subfamily. TRPV1 sub-subfamily. As to quaternary structure, homotetramer. Interacts with PIRT. May also form a heteromeric channel with TRPV3. Interacts with CALM, PRKCM and CSK. Interacts with PRKCG and NTRK1, probably by forming a trimeric complex. Interacts with the Scolopendra mutilans RhTx toxin. Interacts with TMEM100. Interacts with PACS2. Post-translationally, phosphorylation by PKA reverses capsaicin-induced dephosphorylation at multiple sites, probably including Ser-118 as a major phosphorylation site. Phosphorylation by CAMKII seems to regulate binding to vanilloids. Phosphorylated and modulated by PRKCE, PRKCM and probably PRKCZ. Dephosphorylation by calcineurin seems to lead to receptor desensitization and phosphorylation by CAMKII recovers activity.

The protein resides in the postsynaptic cell membrane. It is found in the cell projection. It localises to the dendritic spine membrane. The protein localises to the cell membrane. The enzyme catalyses Ca(2+)(in) = Ca(2+)(out). The catalysed reaction is Mg(2+)(in) = Mg(2+)(out). It carries out the reaction Na(+)(in) = Na(+)(out). It catalyses the reaction K(+)(in) = K(+)(out). With respect to regulation, channel activity is activated via the interaction with PIRT and phosphatidylinositol 4,5-bisphosphate (PIP2). Both PIRT and PIP2 are required to activate channel activity. The channel is sensitized by ATP binding. Repeated stimulation with capsaicin gives rise to progressively smaller responses, due to desensitization. This desensitization is triggered by the influx of calcium ions and is inhibited by elevated ATP levels. Ca(2+) and CALM displace ATP from its binding site and trigger a conformation change that leads to a closed, desensitized channel. Intracellular PIP2 inhibits desensitization. The double-knot toxin (DkTx) from the Chinese earth tiger tarantula activates the channel and traps it in an open conformation. The Scolopendra mutilans RhTx toxin potentiates the heat activation pathway mediated by this channel by binding to the charge-rich outer pore region (in an activated state). Functionally, non-selective calcium permeant cation channel involved in detection of noxious chemical and thermal stimuli. Seems to mediate proton influx and may be involved in intracellular acidosis in nociceptive neurons. Involved in mediation of inflammatory pain and hyperalgesia. Sensitized by a phosphatidylinositol second messenger system activated by receptor tyrosine kinases, which involves PKC isozymes and PCL. Activation by vanilloids, like capsaicin, and temperatures higher than 42 degrees Celsius. Upon activation, exhibits a time- and Ca(2+)-dependent outward rectification, followed by a long-lasting refractory state. Mild extracellular acidic pH (6.5) potentiates channel activation by noxious heat and vanilloids, whereas acidic conditions (pH &lt;6) directly activate the channel. Can be activated by endogenous compounds, including 12-hydroperoxytetraenoic acid and bradykinin. Acts as ionotropic endocannabinoid receptor with central neuromodulatory effects. Triggers a form of long-term depression (TRPV1-LTD) mediated by the endocannabinoid anandamine in the hippocampus and nucleus accumbens by affecting AMPA receptors endocytosis. The protein is Transient receptor potential cation channel subfamily V member 1 (Trpv1) of Cavia porcellus (Guinea pig).